We begin with the raw amino-acid sequence, 337 residues long: 2-oxoglutarate receptor 1 (337 aa).

Over 1–34 the chain is Extracellular; that stretch reads MNEPLDYLANASDFPDYAAAFGNCTDENIPLKMH. 2 N-linked (GlcNAc...) asparagine glycosylation sites follow: Asn10 and Asn23. Residues 35–55 form a helical membrane-spanning segment; that stretch reads YLPVIYGIIFLVGFPGNAVVI. Residues 56-69 are Cytoplasmic-facing; the sequence is STYIFKMRPWKSST. Residues 70 to 90 traverse the membrane as a helical segment; it reads IIMLNLACTDLLYLTSLPFLI. Over 91–116 the chain is Extracellular; it reads HYYASGENWIFGDFMCKFIRFSFHFN. Cys106 and Cys183 form a disulfide bridge. A helical membrane pass occupies residues 117-137; it reads LYSSILFLTCFSIFRYCVIIH. At 138–151 the chain is on the cytoplasmic side; the sequence is PMSCFSIHKTRCAV. Residues 152 to 172 form a helical membrane-spanning segment; that stretch reads VACAVVWIISLVAVIPMTFLI. The Extracellular segment spans residues 173–201; it reads TSTNRTNRSACLDLTSSDELNTIKWYNLI. Asn176 and Asn179 each carry an N-linked (GlcNAc...) asparagine glycan. The helical transmembrane segment at 202-222 threads the bilayer; that stretch reads LTATTFCLPLVIVTLCYTTII. The Cytoplasmic portion of the chain corresponds to 223 to 242; the sequence is HTLTHGLQTDSCLKQKARRL. The chain crosses the membrane as a helical span at residues 243-263; sequence TILLLLAFYVCFLPFHILRVI. At 264–284 the chain is on the extracellular side; sequence RIESRLLSISCSIENQIHEAY. The helical transmembrane segment at 285–305 threads the bilayer; the sequence is IVSRPLAALNTFGNLLLYVVV. The Cytoplasmic segment spans residues 306 to 337; the sequence is SDNFQQAVCSTVRCKVSGNLEQAKKISYSNNP.

Belongs to the G-protein coupled receptor 1 family. As to expression, detected in kidney and, to a lower extent, in placenta. Not detected in brain tissues including the frontal cortex, caudate putamen, thalamus, hypothalamus, hippocampus or pons.

The protein resides in the cell membrane. Its function is as follows. G protein-coupled receptor for dicarboxylates and amino dicarboxylates. Receptor for itaconate, a metabolite produced by myeloid lineages. In the respiratory epithelium, couples the binding of itaconate to the activation of GNA11 and downstream intracellular Ca(2+) release, leading to mucocilliary clearance of airborne pathogens. Receptor for leukotriene E4 (LTE4) produced by mast cells upon allergic inflammation. Binds with high affinity to LTE4 and elicits mucin release from pulmonary epithelium in response to airborne fungi allergens. Regulates mucin-producing goblet cell homeostasis. Receptor for alpha-ketoglutarate produced by proximal tubule renal cells upon metabolic alkalosis. In an intrarenal paracrine signaling pathway, binds alpha-ketoglutarate and drives transepithelial salt reabsorption and bicarbonate secretion by SLC26A4/pendrin-positive intercalated cells. The protein is 2-oxoglutarate receptor 1 (OXGR1) of Homo sapiens (Human).